The following is a 655-amino-acid chain: MGGVYNGDGGTCHRGNIPCPLAAQMKTGEVGRQLYELNMHTGVFSHTVVTSDFEAIQVLYAHRNQSNLLVMEILLKRIKTSAEPITIQLESSFKPQSEDIAFQNAPDYKGGRHIFGQTASSEVPGGVRPVVHLIWTPVTPTLTLPANQSQSSWTFLVAVARSNESAQSFYDSGLALINTGDLRPSHQRSWAELWKGSSIEVIGAESLNRALIGCMFYLLGSFPYVNKEASAAFEFGGVSPGGLSNGSEDEDYHGHVFWDQDTWMYPSIALFYPALARAVLQYRVETLEGAQVNAQQMGCKGLKFAWESAVTGVDVCPEDVYSQQELHINGDVILAFQQYYYLTQDLELFQSGRGSEVVWGVADFWVSRVTWDSADQQYHIKGVIPPDEYYFTVDNSVFTNAVAQRSLEFAVELSALLAEVPPPAWQDIADKIKIPFDPELKFHPEFDGYKPGNKVKQADVVLLGFPLAFPMSPEIRRNDLEMYEAVTDPLGPAMTWGMFALGWLELGEAEKAQKLLQKCFKNVQKPFQVWSESADGSGCVNFLTGMGGFLQAVLFGYTGFRVQKEQLAFSPLLPLDVSALSVKGVCYLGHKMDWTITSEEVKVSVRKTDSKETFTLQVVLNSGSTLLLTPGQSVSFPRQPGHICQLKSSSSCWPI.

258–259 (WD) provides a ligand contact to substrate. Glutamate 388 (proton donor) is an active-site residue. 456–457 (KQ) contributes to the substrate binding site.

It belongs to the glycosyl hydrolase 65 family.

The catalysed reaction is (5R)-5-O-[alpha-D-glucosyl-(1-&gt;2)-beta-D-galactosyl]-5-hydroxy-L-lysyl-[collagen] + H2O = (5R)-5-O-(beta-D-galactosyl)-5-hydroxy-L-lysyl-[collagen] + D-glucose. In terms of biological role, catalyzes the hydrolysis of glucose from the disaccharide unit linked to hydroxylysine residues of collagen and collagen-like proteins. The sequence is that of Protein-glucosylgalactosylhydroxylysine glucosidase from Danio rerio (Zebrafish).